Consider the following 805-residue polypeptide: Sucrose synthase (805 aa).

Residues 275–752 (MVFNVVILSP…GLQRIEEKYT (478 aa)) are GT-B glycosyltransferase.

Belongs to the glycosyltransferase 1 family. Plant sucrose synthase subfamily.

The enzyme catalyses an NDP-alpha-D-glucose + D-fructose = a ribonucleoside 5'-diphosphate + sucrose + H(+). In terms of biological role, sucrose-cleaving enzyme that provides UDP-glucose and fructose for various metabolic pathways. This Vigna radiata var. radiata (Mung bean) protein is Sucrose synthase (SS1).